Reading from the N-terminus, the 483-residue chain is Rhamnulokinase (483 aa).

11–15 (ASSGR) is an ATP binding site. Substrate-binding positions include Gly-79 and 234 to 236 (HDT). Asp-235 serves as the catalytic Proton acceptor. Thr-257 contributes to the ATP binding site. Position 294 (Asn-294) interacts with substrate. Residue Gln-302 coordinates ATP. Cysteines 352 and 369 form a disulfide. An ATP-binding site is contributed by Gly-401.

This sequence belongs to the rhamnulokinase family. Mg(2+) serves as cofactor.

It carries out the reaction L-rhamnulose + ATP = L-rhamnulose 1-phosphate + ADP + H(+). It participates in carbohydrate degradation; L-rhamnose degradation; glycerone phosphate from L-rhamnose: step 2/3. Involved in the catabolism of L-rhamnose (6-deoxy-L-mannose). Catalyzes the transfer of the gamma-phosphate group from ATP to the 1-hydroxyl group of L-rhamnulose to yield L-rhamnulose 1-phosphate. The protein is Rhamnulokinase of Listeria monocytogenes serovar 1/2a (strain ATCC BAA-679 / EGD-e).